The primary structure comprises 384 residues: Multidrug/solvent efflux pump periplasmic linker protein MepA (384 aa).

Residues 1-22 (MQFKPAVTALVSAVALATLLSG) form the signal peptide. Cys23 carries N-palmitoyl cysteine lipidation. Cys23 is lipidated: S-diacylglycerol cysteine. A coiled-coil region spans residues 115-155 (LAERYKQLIDEQAVSKQEYDDANAKRLQAEASLKSAQIDLR). Residues 362–384 (ATNVKKPAGPDQANAAKADAKAE) are disordered. Positions 368–378 (PAGPDQANAAK) are enriched in low complexity.

The protein belongs to the membrane fusion protein (MFP) (TC 8.A.1) family.

Its subcellular location is the cell inner membrane. The periplasmic linker protein component of an organic solvent and antibiotic efflux pump; confers resistance to toluene, hexane, p-xylene, ampicillin, penicillin G, erythromycin, novobiocin and tetracycline. The polypeptide is Multidrug/solvent efflux pump periplasmic linker protein MepA (mepA) (Pseudomonas putida (Arthrobacter siderocapsulatus)).